A 134-amino-acid polypeptide reads, in one-letter code: Cytochrome b5 (134 aa).

Residue Ala2 is modified to N-acetylalanine. Residues Lys7, Lys10, and Lys19 each carry the N6-acetyllysine modification. The Cytochrome b5 heme-binding domain maps to 9-85 (VKYYTLEEIQ…SKTYIIGELH (77 aa)). Residues His44 and His68 each coordinate heme. The helical transmembrane segment at 109–131 (WWTNWVIPAISALAVALMYRLYM) threads the bilayer.

It belongs to the cytochrome b5 family.

It localises to the endoplasmic reticulum membrane. The protein localises to the microsome membrane. In terms of biological role, cytochrome b5 is a membrane-bound hemoprotein functioning as an electron carrier for several membrane-bound oxygenases. It is also involved in several steps of the sterol biosynthesis pathway, particularly in the C-5 double bond introduction during the C-5 desaturation. This Mus musculus (Mouse) protein is Cytochrome b5 (Cyb5a).